The following is a 489-amino-acid chain: Protein nucleotidyltransferase YdiU (489 aa).

Residues Gly88, Gly90, Arg91, Lys111, Asp123, Gly124, Arg174, and Arg181 each contribute to the ATP site. The active-site Proton acceptor is the Asp250. Mg(2+) is bound by residues Asn251 and Asp260. Asp260 contacts ATP.

The protein belongs to the SELO family. The cofactor is Mg(2+). Mn(2+) serves as cofactor.

It carries out the reaction L-seryl-[protein] + ATP = 3-O-(5'-adenylyl)-L-seryl-[protein] + diphosphate. The enzyme catalyses L-threonyl-[protein] + ATP = 3-O-(5'-adenylyl)-L-threonyl-[protein] + diphosphate. The catalysed reaction is L-tyrosyl-[protein] + ATP = O-(5'-adenylyl)-L-tyrosyl-[protein] + diphosphate. It catalyses the reaction L-histidyl-[protein] + UTP = N(tele)-(5'-uridylyl)-L-histidyl-[protein] + diphosphate. It carries out the reaction L-seryl-[protein] + UTP = O-(5'-uridylyl)-L-seryl-[protein] + diphosphate. The enzyme catalyses L-tyrosyl-[protein] + UTP = O-(5'-uridylyl)-L-tyrosyl-[protein] + diphosphate. Nucleotidyltransferase involved in the post-translational modification of proteins. It can catalyze the addition of adenosine monophosphate (AMP) or uridine monophosphate (UMP) to a protein, resulting in modifications known as AMPylation and UMPylation. The polypeptide is Protein nucleotidyltransferase YdiU (Vibrio cholerae serotype O1 (strain ATCC 39315 / El Tor Inaba N16961)).